A 261-amino-acid chain; its full sequence is Ribosomal RNA small subunit methyltransferase A (261 aa).

S-adenosyl-L-methionine is bound by residues Asn15, Ile17, Gly42, Glu64, Asp90, and Asn109.

It belongs to the class I-like SAM-binding methyltransferase superfamily. rRNA adenine N(6)-methyltransferase family. RsmA subfamily.

The protein localises to the cytoplasm. The catalysed reaction is adenosine(1518)/adenosine(1519) in 16S rRNA + 4 S-adenosyl-L-methionine = N(6)-dimethyladenosine(1518)/N(6)-dimethyladenosine(1519) in 16S rRNA + 4 S-adenosyl-L-homocysteine + 4 H(+). Functionally, specifically dimethylates two adjacent adenosines (A1518 and A1519) in the loop of a conserved hairpin near the 3'-end of 16S rRNA in the 30S particle. May play a critical role in biogenesis of 30S subunits. This Wolbachia sp. subsp. Brugia malayi (strain TRS) protein is Ribosomal RNA small subunit methyltransferase A.